We begin with the raw amino-acid sequence, 824 residues long: Frameshifted structural polyprotein (824 aa).

Positions 1 to 10 are enriched in polar residues; the sequence is MEFIPTQTFY. Residues 1–104 are disordered; it reads MEFIPTQTFY…KKKKPGRRER (104 aa). The segment covering 22 to 44 has biased composition (low complexity); it reads RPTIQVIRPRPRPQRQAGQLAQL. Residues 36–68 form a host transcription inhibition region; it reads RQAGQLAQLISAVNKLTMRAVPQQKPRKNRKNK. Over residues 60–72 the composition is skewed to basic residues; that stretch reads KPRKNRKNKKQKQ. The short motif at 61–99 is the Nuclear localization signal element; sequence PRKNRKNKKQKQKQQAPQNNTNQKKQPPKKKPAQKKKKP. A compositionally biased stretch (low complexity) spans 73 to 85; it reads KQQAPQNNTNQKK. Residues 84 to 114 form a binding to the viral RNA region; sequence KKQPPKKKPAQKKKKPGRRERMCMKIENDCI. Positions 86 to 101 are enriched in basic residues; sequence QPPKKKPAQKKKKPGR. 2 ribosome-binding regions span residues 91–100 and 99–113; these read KPAQKKKKPG and PGRRERMCMKIENDC. C113 and C128 are joined by a disulfide. The Peptidase S3 domain maps to 113–261; it reads CIFEVKHEGK…KITPEGAEEW (149 aa). The Charge relay system role is filled by H139. The Nuclear export signal motif lies at 144 to 154; it reads IDNADLAKLAF. Residue D161 is the Charge relay system of the active site. The segment at 183–193 is dimerization of the capsid protein; the sequence is PEGYYNWHHGA. The active-site Charge relay system is S213. Residues 219–223 form a dimerization of the capsid protein region; the sequence is DNKGR. A functions as an uncleaved signal peptide for the precursor of protein E3/E2 region spans residues 262–274; the sequence is SLAIPVMCLLANT. Topologically, residues 262-692 are extracellular; sequence SLAIPVMCLL…YYYELYPTMT (431 aa). N-linked (GlcNAc...) asparagine; by host glycans are attached at residues N273, N588, and N670. Residues 693–713 form a helical membrane-spanning segment; sequence VVVVSVASFILLSMVGMAVGM. The Cytoplasmic segment spans residues 714–748; it reads CMCARRRCITPYELTPGATVPFLLSLICCIRTAKA. Residues C721, C741, and C742 are each lipidated (S-palmitoyl cysteine; by host). The interval 721–741 is transient transmembrane before p62-6K protein processing; sequence CITPYELTPGATVPFLLSLIC. Topologically, residues 749 to 763 are extracellular; the sequence is ATYQEAAVYLWNEQQ. The helical transmembrane segment at 764–784 threads the bilayer; sequence PLFWLQALIPLAALIVLCNCL. Topologically, residues 785 to 795 are cytoplasmic; that stretch reads RLLPCCCKTLA.

This sequence belongs to the alphavirus frameshifted structural polyprotein family. As to quaternary structure, homodimer. Homomultimer. Interacts with host karyopherin KPNA4; this interaction allows the nuclear import of the viral capsid protein. Interacts with spike glycoprotein E2. Interacts with host IRAK1; the interaction leads to inhibition of IRAK1-dependent signaling. In terms of assembly, the precursor of protein E3/E2 and E1 form a heterodimer shortly after synthesis. Processing of the precursor of protein E3/E2 into E2 and E3 results in a heterodimer of the spike glycoproteins E2 and E1. Spike at virion surface are constituted of three E2-E1 heterodimers. Interacts with 6K protein. Interacts with host MXRA8; this interaction mediates virus entry. Specific enzymatic cleavages in vivo yield mature proteins. Capsid protein is auto-cleaved during polyprotein translation, unmasking a signal peptide at the N-terminus of the precursor of E3/E2. The remaining polyprotein is then targeted to the host endoplasmic reticulum, where host signal peptidase cleaves it into pE2 and TF. pE2 is further processed to mature E3 and E2 by host furin in trans-Golgi vesicle. Post-translationally, palmitoylated via thioester bonds. These palmitoylations may induce disruption of the C-terminus transmembrane. This would result in the reorientation of E2 C-terminus from lumenal to cytoplasmic side. In terms of processing, palmitoylated via thioester bonds.

Its subcellular location is the virion. The protein localises to the host cytoplasm. It localises to the host cell membrane. The protein resides in the host nucleus. It is found in the virion membrane. It catalyses the reaction Autocatalytic release of the core protein from the N-terminus of the togavirus structural polyprotein by hydrolysis of a -Trp-|-Ser- bond.. Forms an icosahedral capsid with a T=4 symmetry composed of 240 copies of the capsid protein surrounded by a lipid membrane through which penetrate 80 spikes composed of trimers of E1-E2 heterodimers. The capsid protein binds to the viral RNA genome at a site adjacent to a ribosome binding site for viral genome translation following genome release. Possesses a protease activity that results in its autocatalytic cleavage from the nascent structural protein. Following its self-cleavage, the capsid protein transiently associates with ribosomes, and within several minutes the protein binds to viral RNA and rapidly assembles into icosahedric core particles. The resulting nucleocapsid eventually associates with the cytoplasmic domain of the spike glycoprotein E2 at the cell membrane, leading to budding and formation of mature virions. In case of infection, new virions attach to target cells and after clathrin-mediated endocytosis their membrane fuses with the host endosomal membrane. This leads to the release of the nucleocapsid into the cytoplasm, followed by an uncoating event necessary for the genomic RNA to become accessible. The uncoating might be triggered by the interaction of capsid proteins with ribosomes. Binding of ribosomes would release the genomic RNA since the same region is genomic RNA-binding and ribosome-binding. Specifically inhibits interleukin-1 receptor-associated kinase 1/IRAK1-dependent signaling during viral entry, representing a means by which the alphaviruses may evade innate immune detection and activation prior to viral gene expression. Its function is as follows. Provides the signal sequence for the translocation of the precursor of protein E3/E2 to the host endoplasmic reticulum. Furin-cleaved E3 remains associated with spike glycoprotein E1 and mediates pH protection of the latter during the transport via the secretory pathway. After virion release from the host cell, the assembly protein E3 is gradually released in the extracellular space. Functionally, plays a role in viral attachment to target host cell, by binding to the cell receptor. Synthesized as a p62 precursor which is processed by furin at the cell membrane just before virion budding, giving rise to E2-E1 heterodimer. The p62-E1 heterodimer is stable, whereas E2-E1 is unstable and dissociate at low pH. p62 is processed at the last step, presumably to avoid E1 fusion activation before its final export to cell surface. E2 C-terminus contains a transitory transmembrane that would be disrupted by palmitoylation, resulting in reorientation of the C-terminal tail from lumenal to cytoplasmic side. This step is critical since E2 C-terminus is involved in budding by interacting with capsid proteins. This release of E2 C-terminus in cytoplasm occurs lately in protein export, and precludes premature assembly of particles at the endoplasmic reticulum membrane. In terms of biological role, plays a role in viral assembly and release. This Aedes aegypti (Yellowfever mosquito) protein is Frameshifted structural polyprotein.